Reading from the N-terminus, the 383-residue chain is MKSWFAFFYYLFIKVIGALLFWVKLGNQVTLLVSFPDNARAILKEYQKGHFSFPIHVLLTQHAKSLEKEFPELTVSVINEKHPLHICKAVFSMLNSKTVIVDNYFVLTTVLTSRPDIECIQVWHANGAFKRFGLKDINTQNRSRADIRRFRKVYASFDRIVVGSEHMADIFKEFFDIKGDTFLRFGVPLTDAYYEARENSNDLKSKYQLPAEKKIILYAPTFRDHQFESFSLPFSEKQLQHDLKGEYLLAVKLHPVMKESAELPEDSAWIKDVSDLPLADLLKMSDLLISDYSSVPFEFALLDKPILFYTYDMEAYNRTRGLIRHYTEVIPGMPCCDSGMLLDQLKDMDKLQSEVERFSREWNLYSRGNASKQLLSYVNEKSN.

Belongs to the CDP-glycerol glycerophosphotransferase family.

Its subcellular location is the cell membrane. The enzyme catalyses N-acetyl-beta-D-mannosaminyl-(1-&gt;4)-N-acetyl-alpha-D-glucosaminyl di-trans,octa-cis-undecaprenyl diphosphate + CDP-glycerol = 4-O-[(2R)-glycerylphospho]-N-acetyl-beta-D-mannosaminyl-(1-&gt;4)-N-acetyl-alpha-D-glucosaminyl di-trans,octa-cis-undecaprenyl diphosphate + CMP + H(+). It functions in the pathway cell wall biogenesis; poly(ribitol phosphate) teichoic acid biosynthesis. In terms of biological role, catalyzes the addition of a single glycerol phosphate residue to the prenoldiphosphate-linked disaccharide. The sequence is that of Teichoic acid glycerol-phosphate primase (tarB) from Bacillus spizizenii (strain ATCC 23059 / NRRL B-14472 / W23) (Bacillus subtilis subsp. spizizenii).